We begin with the raw amino-acid sequence, 298 residues long: tRNA-uridine aminocarboxypropyltransferase 2 (298 aa).

N-acetylmethionine is present on Met-1. The tract at residues 1 to 52 is disordered; sequence MESQKEARILQEPVARPPGASRSQTPNAKERQEGGPVPAAAALGAEADDDSA. Ser-132 is subject to Phosphoserine. Positions 178 to 181 match the DXTW motif; that stretch reads DGTW.

It belongs to the TDD superfamily. DTWD2 family.

It is found in the nucleus. It localises to the cytoplasm. The enzyme catalyses a uridine in tRNA + S-adenosyl-L-methionine = a 3-[(3S)-3-amino-3-carboxypropyl]uridine in tRNA + S-methyl-5'-thioadenosine + H(+). In terms of biological role, catalyzes the formation of 3-(3-amino-3-carboxypropyl)uridine (acp3U) at position 20a in the D-loop of several cytoplasmic tRNAs (acp3U(20a)). Also has a weak activity to form acp3U at position 20 in the D-loop of tRNAs (acp3U(20)). Involved in glycoRNA biosynthesis by mediating formation of acp3U, which acts as an attachment site for N-glycans on tRNAs. GlycoRNAs consist of RNAs modified with secretory N-glycans that are presented on the cell surface. This is tRNA-uridine aminocarboxypropyltransferase 2 from Macaca fascicularis (Crab-eating macaque).